The primary structure comprises 202 residues: Imidazoleglycerol-phosphate dehydratase (202 aa).

The protein belongs to the imidazoleglycerol-phosphate dehydratase family.

The protein resides in the cytoplasm. It catalyses the reaction D-erythro-1-(imidazol-4-yl)glycerol 3-phosphate = 3-(imidazol-4-yl)-2-oxopropyl phosphate + H2O. Its pathway is amino-acid biosynthesis; L-histidine biosynthesis; L-histidine from 5-phospho-alpha-D-ribose 1-diphosphate: step 6/9. The sequence is that of Imidazoleglycerol-phosphate dehydratase from Sinorhizobium fredii (strain NBRC 101917 / NGR234).